The sequence spans 210 residues: uncharacterized protein (210 aa).

The next 4 helical transmembrane spans lie at 5 to 25 (LAYI…TMLV), 50 to 70 (FWTV…VILF), 75 to 95 (YLGA…KSMF), and 155 to 175 (IILA…LVYI).

Belongs to the Rht family.

Its subcellular location is the cell membrane. This is an uncharacterized protein from Bacillus subtilis (strain 168).